Reading from the N-terminus, the 152-residue chain is Melatonin receptor type 1B (152 aa).

The Cytoplasmic segment spans residues 1-12 (HSFVYEKLFSLW). A helical transmembrane segment spans residues 13–33 (NTILYVCLIWTLTVVATVPNF). Residues 34-57 (FVGSLEYDPRIYSCTFVQTVSSSY) are Extracellular-facing. A helical transmembrane segment spans residues 58-78 (TITVVVIHFILPITVVTFCYL). Residues 79-110 (RIWILVIQVRRKVKSEFKPRMKQSDFRNFLTM) are Cytoplasmic-facing. A helical membrane pass occupies residues 111-131 (FVVFVIFAFCWAPLNFIGLAV). The Extracellular segment spans residues 132–144 (SINPTEVAPKIPE). Residues 145 to 152 (WLFVVSYF) traverse the membrane as a helical segment.

Belongs to the G-protein coupled receptor 1 family.

The protein localises to the cell membrane. Functionally, high affinity receptor for melatonin. The activity of this receptor is mediated by pertussis toxin sensitive G proteins that inhibits adenylate cyclase activity. The protein is Melatonin receptor type 1B (mtnr1b) of Xenopus laevis (African clawed frog).